The following is a 301-amino-acid chain: GTPase Era (301 aa).

The 169-residue stretch at 7–175 (YCGFIAIVGR…AAIVRKHLPE (169 aa)) folds into the Era-type G domain. A G1 region spans residues 15 to 22 (GRPNVGKS). 15–22 (GRPNVGKS) contributes to the GTP binding site. Residues 41–45 (QTTRH) are G2. Positions 62–65 (DTPG) are G3. Residues 62-66 (DTPGL) and 124-127 (NKVD) each bind GTP. Residues 124-127 (NKVD) form a G4 region. Positions 154–156 (ISA) are G5. Residues 206-283 (LGAELPYSVT…HLELWVKVKS (78 aa)) form the KH type-2 domain.

It belongs to the TRAFAC class TrmE-Era-EngA-EngB-Septin-like GTPase superfamily. Era GTPase family. As to quaternary structure, monomer.

The protein localises to the cytoplasm. The protein resides in the cell inner membrane. An essential GTPase that binds both GDP and GTP, with rapid nucleotide exchange. Plays a role in 16S rRNA processing and 30S ribosomal subunit biogenesis and possibly also in cell cycle regulation and energy metabolism. This Shigella flexneri protein is GTPase Era.